The primary structure comprises 167 residues: C-X-C motif chemokine 15 (167 aa).

The first 25 residues, 1-25, serve as a signal peptide directing secretion; it reads MAAQGWSMLLLAVLNLGIFVRPCDT. 2 disulfides stabilise this stretch: Cys30/Cys57 and Cys32/Cys73. The residue at position 157 (Ser157) is a Phosphoserine.

The protein belongs to the intercrine alpha (chemokine CxC) family. Expression restricted to the lung, produced by bronchoepithelial cells and is released into the airways. Expressed at low levels in fetal lung.

It is found in the secreted. In terms of biological role, chemotactic for neutrophils. Involved in lung-specific neutrophil trafficking during normal and inflammatory conditions. The protein is C-X-C motif chemokine 15 (Cxcl15) of Mus musculus (Mouse).